The sequence spans 135 residues: Retinol-binding protein 1 (135 aa).

Residues 22–32 (RALDVNVALRK) form an important for interaction with STRA6 region. All-trans-retinol-binding residues include lysine 41, methionine 63, and glutamine 109.

Belongs to the calycin superfamily. Fatty-acid binding protein (FABP) family. As to quaternary structure, interacts (only as retinol-free apoprotein) with STRA6.

It localises to the cytoplasm. Its subcellular location is the lipid droplet. Functionally, cytoplasmic retinol-binding protein. Accepts retinol from the transport protein STRA6, and thereby contributes to retinol uptake, storage and retinoid homeostasis. This Mus musculus (Mouse) protein is Retinol-binding protein 1 (Rbp1).